We begin with the raw amino-acid sequence, 661 residues long: Immunoglobulin-like domain-containing receptor 2 (661 aa).

An N-terminal signal peptide occupies residues 1–35 (MPAFPTLDLDGKLGKMDRVVLGWTAVFWLTAMVEG). Positions 36–177 (LQVTVPDKKK…LEGKNEDSVE (142 aa)) constitute an Ig-like V-type domain. The Lumenal portion of the chain corresponds to 36-201 (LQVTVPDKKK…PSFAVEIMPE (166 aa)). A disulfide bridge links C57 with C160. The helical transmembrane segment at 202 to 222 (WVFVGLVILGIFLFFVLVGIC) threads the bilayer. At 223–661 (WCQCCPHSCC…DFPTRMSLVV (439 aa)) the chain is on the cytoplasmic side. Disordered regions lie at residues 288-310 (LMDK…HSVR), 410-429 (EDRE…MLSR), and 453-661 (QRSR…SLVV). 2 stretches are compositionally biased toward basic and acidic residues: residues 410–428 (EDRE…EMLS) and 463–478 (HEAR…ESRA). Position 487 is a phosphoserine (S487). Basic and acidic residues predominate over residues 491 to 506 (YYGRGRSREPPGDGER). An Omega-N-methylarginine modification is found at R559. S594 is modified (phosphoserine). The segment covering 595-607 (EGEDEDDAADEDA) has biased composition (acidic residues). Residues 628 to 639 (RGRDLSFHSNSE) show a composition bias toward basic and acidic residues.

Belongs to the immunoglobulin superfamily. LISCH7 family. As to quaternary structure, interacts with MARVELD2 and OCLN. Interacts with P4HB and HSPA5; the interaction with HSPA5 stabilizes ILDR2 expression. Interacts (via C-terminus) with TRA2A, TRA2B and SRSF1. In terms of tissue distribution, expressed in epithelial tissues, mainly in liver, kidney and colon.

It is found in the endoplasmic reticulum membrane. It localises to the cell junction. Its subcellular location is the tight junction. The protein resides in the nucleus. Its function is as follows. May be involved in ER stress pathways with effects on lipid homeostasis and insulin secretion. With ILDR1 and LSR, involved in the maintain of the epithelial barrier function through the recruitment of MARVELD2/tricellulin to tricellular tight junctions. Also functions as a B7-like protein family member expressed on immune cells and inflamed tissue and with T-cell inhibitory activity. In the inner ear, may regulate alternative pre-mRNA splicing via binding to TRA2A, TRA2B and SRSF1. The sequence is that of Immunoglobulin-like domain-containing receptor 2 from Mus musculus (Mouse).